A 158-amino-acid polypeptide reads, in one-letter code: Cyclic pyranopterin monophosphate synthase (158 aa).

Substrate is bound by residues 76–78 and 114–115; these read LCH and ME. Aspartate 129 is an active-site residue.

This sequence belongs to the MoaC family. In terms of assembly, homohexamer; trimer of dimers.

It catalyses the reaction (8S)-3',8-cyclo-7,8-dihydroguanosine 5'-triphosphate = cyclic pyranopterin phosphate + diphosphate. Its pathway is cofactor biosynthesis; molybdopterin biosynthesis. Catalyzes the conversion of (8S)-3',8-cyclo-7,8-dihydroguanosine 5'-triphosphate to cyclic pyranopterin monophosphate (cPMP). The sequence is that of Cyclic pyranopterin monophosphate synthase from Shewanella loihica (strain ATCC BAA-1088 / PV-4).